Reading from the N-terminus, the 185-residue chain is Fimbrial subunit type 1 (185 aa).

Residues 1-22 (MRHKLMTSTIASLMFVAAAAVA) form the signal peptide. A disulfide bond links Cys46 and Cys86.

This sequence belongs to the fimbrial protein family.

Its subcellular location is the fimbrium. This chain is Fimbrial subunit type 1, found in Salmonella typhimurium.